Reading from the N-terminus, the 217-residue chain is MAAGSWTSLLLAFTLLCLPQLREAGAFPTIPLSRLLDNAMLRAHRLHQLAFDTYQEFEEAYIPKEQKYSFLQNPQTSLCFSESIPTPASKKETQQKSNLELLRMSLLLIQSWFEPVQFLRSVFANSLLYGVSDSDVYEYLKDLEEGIQTLMGRLEDGSPRTGEIFMQTYRKFDVNSQNNDALLKNYGLLYCFRKDMDKVETFLRIVQCRSVEGSCGF.

The signal sequence occupies residues Met1–Ala24. His44 is a Zn(2+) binding site. A disulfide bridge links Cys79 with Cys191. Ser132 is subject to Phosphoserine. Glu200 serves as a coordination point for Zn(2+). A disulfide bridge links Cys208 with Cys215.

It belongs to the somatotropin/prolactin family.

It localises to the secreted. Functionally, plays an important role in growth control. Its major role in stimulating body growth is to stimulate the liver and other tissues to secrete IGF1. It stimulates both the differentiation and proliferation of myoblasts. It also stimulates amino acid uptake and protein synthesis in muscle and other tissues. The chain is Somatotropin (GH1) from Callithrix jacchus (White-tufted-ear marmoset).